The following is a 418-amino-acid chain: Nucleoside permease NupG (418 aa).

At 1–4 the chain is on the cytoplasmic side; that stretch reads MNLK. A helical transmembrane segment spans residues 5–29; that stretch reads LQLKILSFLQFCLWGSWLTTLGSYM. The Periplasmic portion of the chain corresponds to 30–36; sequence FVTLKFD. The helical transmembrane segment at 37–58 threads the bilayer; that stretch reads GASIGAVYSSLGIAAVFMPALL. The Cytoplasmic segment spans residues 59–67; that stretch reads GIVADKWLS. A helical transmembrane segment spans residues 68 to 88; the sequence is AKWVYAICHTIGAITLFMAAQ. Topologically, residues 89-91 are periplasmic; it reads VTT. Residues 92–113 traverse the membrane as a helical segment; the sequence is PEAMFLVILINSFAYMPTLGLI. Over 114–135 the chain is Cytoplasmic; that stretch reads NTISYYRLQNAGMDIVTDFPPI. The helical transmembrane segment at 136-156 threads the bilayer; it reads RIWGTIGFIMAMWVVSLSGFE. The Periplasmic segment spans residues 157–158; sequence LS. The helical transmembrane segment at 159 to 178 threads the bilayer; the sequence is HMQLYIGAALSAILVLFTLT. Residues 179–209 lie on the Cytoplasmic side of the membrane; it reads LPHIPVAKQQANQSWTTLLGLDAFALFKNKR. A helical transmembrane segment spans residues 210–236; that stretch reads MAIFFIFSMLLGAELQITNMFGNTFLH. Residues 237–247 are Periplasmic-facing; it reads SFDKDPMFASS. A helical transmembrane segment spans residues 248-268; that stretch reads FIVQHASIIMSISQISETLFI. The Cytoplasmic portion of the chain corresponds to 269-280; sequence LTIPFFLSRYGI. A helical membrane pass occupies residues 281 to 300; sequence KNVMMISIVAWILRFALFAY. Over 301 to 305 the chain is Periplasmic; it reads GDPTP. A helical membrane pass occupies residues 306–326; the sequence is FGTVLLVLSMIVYGCAFDFFN. The Cytoplasmic portion of the chain corresponds to 327 to 346; the sequence is ISGSVFVEKEVSPAIRASAQ. The chain crosses the membrane as a helical span at residues 347 to 369; it reads GMFLMMTNGFGCILGGIVSGKVV. Topologically, residues 370-379 are periplasmic; the sequence is EMYTQNGITD. A helical membrane pass occupies residues 380 to 403; it reads WQTVWLIFAGYSVVLAFAFMAMFK. Residues 404–418 lie on the Cytoplasmic side of the membrane; it reads YKHVRVPTGTQTVSH.

Belongs to the major facilitator superfamily. Nucleoside:H(+) symporter (NHS) (TC 2.A.1.10) family.

The protein resides in the cell inner membrane. The catalysed reaction is adenosine(in) + H(+)(in) = adenosine(out) + H(+)(out). It catalyses the reaction uridine(in) + H(+)(in) = uridine(out) + H(+)(out). The enzyme catalyses thymidine(in) + H(+)(in) = thymidine(out) + H(+)(out). It carries out the reaction cytidine(in) + H(+)(in) = cytidine(out) + H(+)(out). The catalysed reaction is 2'-deoxycytidine(in) + H(+)(in) = 2'-deoxycytidine(out) + H(+)(out). It catalyses the reaction guanosine(in) + H(+)(in) = guanosine(out) + H(+)(out). The enzyme catalyses inosine(in) + H(+)(in) = inosine(out) + H(+)(out). Inhibited by the protonophore uncouplers 2,4-dinitrophenol and carbonyl cyanide m-chlorophenylhydrazone (CCCP), and by valinomycin. Inhibited by the nucleoside antibiotic showdomycin. In terms of biological role, broad-specificity transporter of purine and pyrimidine nucleosides. Can transport adenosine, uridine, thymidine, cytidine, deoxycytidine, guanosine and inosine. Can also transport xanthosine, but with a very low affinity. Transport is driven by a proton motive force. In Escherichia coli (strain K12), this protein is Nucleoside permease NupG.